The following is an 84-amino-acid chain: Sulfur carrier protein TusA (84 aa).

Catalysis depends on C19, which acts as the Cysteine persulfide intermediate.

The protein belongs to the sulfur carrier protein TusA family. In terms of assembly, interacts with IscS.

Its subcellular location is the cytoplasm. The protein operates within tRNA modification. Sulfur carrier protein involved in sulfur trafficking in the cell. Part of a sulfur-relay system required for 2-thiolation during synthesis of 2-thiouridine of the modified wobble base 5-methylaminomethyl-2-thiouridine (mnm(5)s(2)U) in tRNA. Interacts with IscS and stimulates its cysteine desulfurase activity. Accepts an activated sulfur from IscS, which is then transferred to TusD, and thus determines the direction of sulfur flow from IscS to 2-thiouridine formation. Also appears to be involved in sulfur transfer for the biosynthesis of molybdopterin. In Yersinia enterocolitica serotype O:8 / biotype 1B (strain NCTC 13174 / 8081), this protein is Sulfur carrier protein TusA.